Reading from the N-terminus, the 119-residue chain is MPRVKGGPVTRRRRKKVLKLAKGYFGAKHALYRVANQQVMKSLMYAYRDRRQRKRDFRKLWIVRINAAARQNGLSYSRLMHGLKLAGVEVNRKMLADLAVNDQAAFAQLADLAKANLNK.

It belongs to the bacterial ribosomal protein bL20 family.

Binds directly to 23S ribosomal RNA and is necessary for the in vitro assembly process of the 50S ribosomal subunit. It is not involved in the protein synthesizing functions of that subunit. The polypeptide is Large ribosomal subunit protein bL20 (Geobacillus kaustophilus (strain HTA426)).